A 363-amino-acid polypeptide reads, in one-letter code: Outer membrane protein P2 (363 aa).

An N-terminal signal peptide occupies residues 1 to 20 (MKKTLAALIVGAFAASAANA).

It belongs to the Gram-negative porin family. As to quaternary structure, homotrimer.

The protein resides in the cell outer membrane. Its function is as follows. Forms pores that allow passive diffusion of small molecules across the outer membrane. In Haemophilus influenzae, this protein is Outer membrane protein P2 (ompP2).